A 116-amino-acid chain; its full sequence is Large ribosomal subunit protein bL19 (116 aa).

The protein belongs to the bacterial ribosomal protein bL19 family.

Functionally, this protein is located at the 30S-50S ribosomal subunit interface and may play a role in the structure and function of the aminoacyl-tRNA binding site. The polypeptide is Large ribosomal subunit protein bL19 (Stutzerimonas stutzeri (strain A1501) (Pseudomonas stutzeri)).